The sequence spans 317 residues: SWI/SNF-related matrix-associated actin-dependent regulator of chromatin subfamily E member 1-related (317 aa).

The segment covering 1–17 (MSHGPKQPGAAAAPAGG) has biased composition (low complexity). Residues 1-71 (MSHGPKQPGA…RKKILPNGPK (71 aa)) are disordered. A Glycyl lysine isopeptide (Lys-Gly) (interchain with G-Cter in SUMO2) cross-link involves residue K31. Residues 31–52 (KQERGEGPRAGEKGSHEEEPVK) are compositionally biased toward basic and acidic residues. Residues 53–65 (KRGWPKGKKRKKI) show a composition bias toward basic residues. Residues 70–138 (PKAPVTGYVR…QYMKELRAYQ (69 aa)) constitute a DNA-binding region (HMG box). S160 is subject to Phosphoserine. Positions 190 to 257 (EEFLDQNKAR…LQQQLQAVRQ (68 aa)) form a coiled coil.

As to quaternary structure, component of a BHC histone deacetylase complex that contains HDAC1, HDAC2, HMG20B/BRAF35, KDM1A, RCOR1/CoREST and PHF21A/BHC80. The BHC complex may also contain ZMYM2, ZNF217, ZMYM3, GSE1 and GTF2I. Interacts with the BRCA2 tumor suppressor protein. Interacts with DTNB. As to expression, ubiquitously expressed in adult tissues.

The protein resides in the nucleus. It is found in the chromosome. Functionally, required for correct progression through G2 phase of the cell cycle and entry into mitosis. Required for RCOR1/CoREST mediated repression of neuronal specific gene promoters. This is SWI/SNF-related matrix-associated actin-dependent regulator of chromatin subfamily E member 1-related (HMG20B) from Homo sapiens (Human).